We begin with the raw amino-acid sequence, 441 residues long: Tol-Pal system protein TolB (441 aa).

The first 23 residues, 1-23, serve as a signal peptide directing secretion; that stretch reads MRNAIATVLLGLAMLLPVGAVQA. The interval 420-441 is disordered; the sequence is RNLKPVKTPDGASDPSWSPLQN.

It belongs to the TolB family. The Tol-Pal system is composed of five core proteins: the inner membrane proteins TolA, TolQ and TolR, the periplasmic protein TolB and the outer membrane protein Pal. They form a network linking the inner and outer membranes and the peptidoglycan layer.

Its subcellular location is the periplasm. In terms of biological role, part of the Tol-Pal system, which plays a role in outer membrane invagination during cell division and is important for maintaining outer membrane integrity. This chain is Tol-Pal system protein TolB, found in Ruegeria sp. (strain TM1040) (Silicibacter sp.).